The primary structure comprises 276 residues: Formamidopyrimidine-DNA glycosylase (276 aa).

Pro2 (schiff-base intermediate with DNA) is an active-site residue. The Proton donor role is filled by Glu3. The active-site Proton donor; for beta-elimination activity is Lys58. Positions 92, 111, and 154 each coordinate DNA. The FPG-type zinc finger occupies 239–273 (QVYGHVGEECPRCGNIFEKIKVSGRGTTFCPHCQV). Arg263 (proton donor; for delta-elimination activity) is an active-site residue.

Belongs to the FPG family. Monomer. It depends on Zn(2+) as a cofactor.

It carries out the reaction Hydrolysis of DNA containing ring-opened 7-methylguanine residues, releasing 2,6-diamino-4-hydroxy-5-(N-methyl)formamidopyrimidine.. It catalyses the reaction 2'-deoxyribonucleotide-(2'-deoxyribose 5'-phosphate)-2'-deoxyribonucleotide-DNA = a 3'-end 2'-deoxyribonucleotide-(2,3-dehydro-2,3-deoxyribose 5'-phosphate)-DNA + a 5'-end 5'-phospho-2'-deoxyribonucleoside-DNA + H(+). Functionally, involved in base excision repair of DNA damaged by oxidation or by mutagenic agents. Acts as a DNA glycosylase that recognizes and removes damaged bases. Has a preference for oxidized purines, such as 7,8-dihydro-8-oxoguanine (8-oxoG). Has AP (apurinic/apyrimidinic) lyase activity and introduces nicks in the DNA strand. Cleaves the DNA backbone by beta-delta elimination to generate a single-strand break at the site of the removed base with both 3'- and 5'-phosphates. This Lactobacillus acidophilus (strain ATCC 700396 / NCK56 / N2 / NCFM) protein is Formamidopyrimidine-DNA glycosylase.